Here is a 121-residue protein sequence, read N- to C-terminus: Small ribosomal subunit protein uS13 (121 aa).

Residues R93–K121 are disordered. The segment covering A106–K121 has biased composition (basic residues).

This sequence belongs to the universal ribosomal protein uS13 family. In terms of assembly, part of the 30S ribosomal subunit. Forms a loose heterodimer with protein S19. Forms two bridges to the 50S subunit in the 70S ribosome.

Its function is as follows. Located at the top of the head of the 30S subunit, it contacts several helices of the 16S rRNA. In the 70S ribosome it contacts the 23S rRNA (bridge B1a) and protein L5 of the 50S subunit (bridge B1b), connecting the 2 subunits; these bridges are implicated in subunit movement. Contacts the tRNAs in the A and P-sites. The protein is Small ribosomal subunit protein uS13 of Streptococcus uberis (strain ATCC BAA-854 / 0140J).